A 305-amino-acid polypeptide reads, in one-letter code: Ribonuclease BN (305 aa).

His-64, His-66, Asp-68, His-69, His-141, Asp-212, and His-270 together coordinate Zn(2+). Catalysis depends on Asp-68, which acts as the Proton acceptor.

It belongs to the RNase Z family. RNase BN subfamily. In terms of assembly, homodimer. It depends on Zn(2+) as a cofactor.

In terms of biological role, zinc phosphodiesterase, which has both exoribonuclease and endoribonuclease activities. This Salmonella agona (strain SL483) protein is Ribonuclease BN.